A 236-amino-acid chain; its full sequence is Phosphoserine phosphatase (236 aa).

The active-site Nucleophile is the Asp-30. The Mg(2+) site is built by Asp-30 and Asp-32. The active-site Proton donor is Asp-32. Substrate contacts are provided by residues Glu-39, Arg-76, 120–121, and Lys-169; that span reads SG. Position 192 (Asp-192) interacts with Mg(2+). A substrate-binding site is contributed by Asn-195.

The protein belongs to the HAD-like hydrolase superfamily. SerB family. The cofactor is Mg(2+).

It catalyses the reaction O-phospho-L-serine + H2O = L-serine + phosphate. It carries out the reaction O-phospho-D-serine + H2O = D-serine + phosphate. It participates in amino-acid biosynthesis; L-serine biosynthesis; L-serine from 3-phospho-D-glycerate: step 3/3. In Polaromonas sp. (strain JS666 / ATCC BAA-500), this protein is Phosphoserine phosphatase.